We begin with the raw amino-acid sequence, 203 residues long: Ras-related protein Rab-13 (203 aa).

GTP contacts are provided by S17, G18, G20, K21, T22, C23, and T40. T22 contributes to the Mg(2+) binding site. The short motif at 31–45 is the Switch 1 element; it reads DNFNSTYISTIGIDF. A Mg(2+)-binding site is contributed by T40. Glycyl lysine isopeptide (Lys-Gly) (interchain with G-Cter in ubiquitin) cross-links involve residues K46 and K58. D63 is a Mg(2+) binding site. A Switch 2 motif is present at residues 63–80; it reads DTAGQERFKTITTAYYRG. GTP is bound by residues G66, N121, K122, D124, A152, and K153. The tract at residues 173 to 203 is disordered; the sequence is TGGRRSGNSSKPSSTDLKVSDKKNSNKCSLG. S178 is subject to Phosphoserine. A compositionally biased stretch (polar residues) spans 178 to 189; it reads SGNSSKPSSTDL. C200 carries the cysteine methyl ester modification. Residue C200 is the site of S-geranylgeranyl cysteine attachment. Residues 201 to 203 constitute a propeptide, removed in mature form; the sequence is SLG.

It belongs to the small GTPase superfamily. Rab family. In terms of assembly, interacts (GTP-bound form) with MICALL2; competes with RAB8A and is involved in tight junctions assembly. Interacts (GTP-bound form) with MICALL1. Interacts (GTP-bound form) with MICAL1, MICAL3, MICALCL, EHBP1 and EHBP1L1; ternary complexes of RAB8A, RAB13 and either MICAL1 or EHBP1L1 are possible. Interacts with PRKACA; downstream effector of RAB13 involved in tight junction assembly. Interacts with GRB2; may recruit RAB13 to the leading edge of migrating endothelial cells where it can activate RHOA. Interacts (isoprenylated form) with PDE6D; dissociates RAB13 from membranes. Interacts with BICDL2/BICDR2. Interacts with LEPROT and LEPROTL1. Mg(2+) is required as a cofactor. In terms of processing, ubiquitinated via 'Lys-11'-linked ubiquitination on Lys-46 and Lys-58; impairing the recruitment of guanosine diphosphate (GDP) dissociation inhibitor 1/GDI1. Highest levels found in lung, kidney, whole brain and spinal cord. Expressed in all tissues tested including Sertoli and germ cells (at protein level). Also detected in osteoclasts.

Its subcellular location is the cell membrane. It localises to the cytoplasmic vesicle membrane. It is found in the cell junction. The protein localises to the tight junction. The protein resides in the golgi apparatus. Its subcellular location is the trans-Golgi network membrane. It localises to the recycling endosome membrane. It is found in the cell projection. The protein localises to the lamellipodium. The enzyme catalyses GTP + H2O = GDP + phosphate + H(+). Regulated by guanine nucleotide exchange factors (GEFs) including DENND1C, which promote the exchange of bound GDP for free GTP. Regulated by GTPase activating proteins (GAPs) which increase the GTP hydrolysis activity. Inhibited by GDP dissociation inhibitors (GDIs). Activated in response to insulin. The small GTPases Rab are key regulators of intracellular membrane trafficking, from the formation of transport vesicles to their fusion with membranes. Rabs cycle between an inactive GDP-bound form and an active GTP-bound form that is able to recruit to membranes different sets of downstream effectors directly responsible for vesicle formation, movement, tethering and fusion. RAB13 is involved in endocytic recycling and regulates the transport to the plasma membrane of transmembrane proteins like the tight junction protein OCLN/occludin. Thereby, it regulates the assembly and the activity of tight junctions. Moreover, it may also regulate tight junction assembly by activating the PKA signaling pathway and by reorganizing the actin cytoskeleton through the activation of the downstream effectors PRKACA and MICALL2 respectively. Through its role in tight junction assembly, may play a role in the establishment of Sertoli cell barrier. Plays also a role in angiogenesis through regulation of endothelial cells chemotaxis. Also involved in neurite outgrowth. Has also been proposed to play a role in post-Golgi membrane trafficking from the TGN to the recycling endosome. Finally, it has been involved in insulin-induced transport to the plasma membrane of the glucose transporter GLUT4 and therefore may play a role in glucose homeostasis. The chain is Ras-related protein Rab-13 from Rattus norvegicus (Rat).